We begin with the raw amino-acid sequence, 158 residues long: Lipoprotein signal peptidase (158 aa).

4 consecutive transmembrane segments (helical) span residues 7–27, 38–58, 67–87, and 95–115; these read LFWI…YWVV, ILPG…FSLF, WLSL…PVLD, and GLIL…GYVV. Active-site residues include aspartate 116 and aspartate 132. A helical membrane pass occupies residues 125–145; the sequence is FAVFNMADSFISIGIVCLLLA.

This sequence belongs to the peptidase A8 family.

The protein resides in the cell inner membrane. The enzyme catalyses Release of signal peptides from bacterial membrane prolipoproteins. Hydrolyzes -Xaa-Yaa-Zaa-|-(S,diacylglyceryl)Cys-, in which Xaa is hydrophobic (preferably Leu), and Yaa (Ala or Ser) and Zaa (Gly or Ala) have small, neutral side chains.. It functions in the pathway protein modification; lipoprotein biosynthesis (signal peptide cleavage). In terms of biological role, this protein specifically catalyzes the removal of signal peptides from prolipoproteins. The protein is Lipoprotein signal peptidase of Nostoc sp. (strain PCC 7120 / SAG 25.82 / UTEX 2576).